A 750-amino-acid polypeptide reads, in one-letter code: Nibrin (750 aa).

One can recognise an FHA domain in the interval 24–83 (YIVGRKNCAILIENDQSISRNHAVLRVNFPVTSLSQTDEIPTLTIKDNSKYGTFINEEKM). BRCT domains are found at residues 105–181 (KFRV…SEFL) and 224–315 (GKTF…LAVI). Positions 111-328 (EPLVVCSSCL…TESYCNPQGQ (218 aa)) are mediates interaction with SP100. The interaction with MTOR, MAPKAP1 and RICTOR stretch occupies residues 221–403 (IFKGKTFVFL…SRKLLQGTCN (183 aa)). A Phosphothreonine modification is found at T337. S343 is modified (phosphoserine; by ATM). Phosphoserine occurs at positions 347 and 433. 2 disordered regions span residues 429 to 479 (NYQL…SSCK) and 494 to 550 (QPAG…RKRK). K436 is covalently cross-linked (Glycyl lysine isopeptide (Lys-Gly) (interchain with G-Cter in ubiquitin)). Residues 446 to 457 (WSSQQQLNSIKN) show a composition bias toward polar residues. The Nuclear localization signal signature appears at 461-467 (PCSRKRE). The segment covering 502–514 (KSKDHESQSETLD) has biased composition (basic and acidic residues). Residues S508 and S517 each carry the phosphoserine modification. K528 participates in a covalent cross-link: Glycyl lysine isopeptide (Lys-Gly) (interchain with G-Cter in SUMO2). A compositionally biased stretch (basic and acidic residues) spans 540–550 (STEDLRARKRK). Residues K569 and K580 each participate in a glycyl lysine isopeptide (Lys-Gly) (interchain with G-Cter in SUMO2) cross-link. A compositionally biased stretch (basic and acidic residues) spans 581–599 (QEADVSIRKKPRMDAERNQ). Positions 581 to 622 (QEADVSIRKKPRMDAERNQHLNGGPVPESNSALQEDETGKKD) are disordered. Residues K683, K687, and K732 each participate in a glycyl lysine isopeptide (Lys-Gly) (interchain with G-Cter in ubiquitin) cross-link. Residues 737–746 (ADDLFRYNPN) carry the FxF/Y motif motif.

Belongs to the Nibrin family. As to quaternary structure, component of the MRN complex composed of two heterodimers RAD50 and MRE11 associated with a single NBN. The MRN complexes dimerize on DNA to form joined MRN-MRN oligomers required for DNA double-strand break repair. The MRN complexes dimerize on DNA to form joined MRN-MRN oligomers required for DNA double-strand break repair. As part of the MRN complex, interacts with MCM9; the interaction recruits the complex to DNA repair sites. Component of the BASC complex, at least composed of BRCA1, MSH2, MSH6, MLH1, ATM, BLM, RAD50, MRE11 and NBN. Interacts with histone H2AX; this requires phosphorylation of H2AX on 'Ser-139' and promotes NBN recruitment to DNA damage sites. Interacts with (phosphorylated) MDC1; promoting NBN recruitment to DNA damage sites. Interacts with (phosphorylated) RAD17; promoting NBN recruitment to DNA damage sites. Interacts (via FxF/Y motif) with ATM. Interacts with HJURP. Interacts with INTS3. Interacts with KPNA2. Interacts with TERF2; interaction is disrupted upon NBN phosphorylation by CDK2. Interacts with (phosphorylated) RBBP8/CtIP; the interaction links the role of the MRN complex in DNA double-strand break sensing to resection. Interacts with SP100; recruits NBN to PML bodies. Interacts with ATF2. Interacts with MTOR, MAPKAP1 isoform 2 and RICTOR; indicative for an association with the mTORC2 complex. Interacts with MRNIP. Interacts with UFL1; promoting UFL1 recruitment to double-strand breaks following DNA damage. Interacts with CYREN (via XLF motif). In terms of processing, phosphorylated by ATM in response of ionizing radiation, and such phosphorylation is responsible intra-S phase checkpoint control and telomere maintenance. Phosphorylated at Ser-433 by CDK2 in S/G2 phases abolishes interaction with TERF2, enabling DCLRE1B/Apollo recruitment to telomeres. Phosphorylation at Ser-433 in response to dysfunctional telomeres promotes non-homologous end joining repair at telomeres, while dephosphorylation by PPP1CA promotes microhomology-mediated end-joining (MMEJ) repair. Ubiquitinated at Lys-436 via 'Lys-6'-linked ubiquitin chains by RNF8, promoting NBN recruitment to DNA double-strand breaks (DSBs). Ubiquitinated at Lys-687 via 'Lys-63'-linked ubiquitin chains by PELI1: ubiquitination takes place following PELI1 phosphorylation and promotes ATM activation and DNA repair. Ubiquitinated at Lys-732 via 'Lys-63'-linked ubiquitin chains by the SCF(SKP2) complex: ubiquitination takes place following SKP2 phosphorylation and promotes ATM activation and DNA repair. Present at approximately equal levels in the heart at fetal day 17, at relatively constant levels at postnatal days 10, 17 and 21 and at slightly lower levels in the adult heart. Barely detectable in the brain. Not detected in kidney, very low levels in liver and skeletal muscle and moderate levels in heart, lung and brain (at protein level).

It localises to the nucleus. Its subcellular location is the chromosome. The protein resides in the PML body. The protein localises to the telomere. Its function is as follows. Component of the MRN complex, which plays a central role in double-strand break (DSB) repair, DNA recombination, maintenance of telomere integrity and meiosis. The MRN complex is involved in the repair of DNA double-strand breaks (DSBs) via homologous recombination (HR), an error-free mechanism which primarily occurs during S and G2 phases. The complex (1) mediates the end resection of damaged DNA, which generates proper single-stranded DNA, a key initial steps in HR, and is (2) required for the recruitment of other repair factors and efficient activation of ATM and ATR upon DNA damage. The MRN complex possesses single-strand endonuclease activity and double-strand-specific 3'-5' exonuclease activity, which are provided by MRE11, to initiate end resection, which is required for single-strand invasion and recombination. Within the MRN complex, NBN acts as a protein-protein adapter, which specifically recognizes and binds phosphorylated proteins, promoting their recruitment to DNA damage sites. Recruits MRE11 and RAD50 components of the MRN complex to DSBs in response to DNA damage. Promotes the recruitment of PI3/PI4-kinase family members ATM, ATR, and probably DNA-PKcs to the DNA damage sites, activating their functions. Mediates the recruitment of phosphorylated RBBP8/CtIP to DSBs, leading to cooperation between the MRN complex and RBBP8/CtIP to initiate end resection. RBBP8/CtIP specifically promotes the endonuclease activity of the MRN complex to clear DNA ends containing protein adducts. The MRN complex is also required for the processing of R-loops. NBN also functions in telomere length maintenance via its interaction with TERF2: interaction with TERF2 during G1 phase preventing recruitment of DCLRE1B/Apollo to telomeres. NBN also promotes DNA repair choice at dysfunctional telomeres: NBN phosphorylation by CK2 promotes non-homologous end joining repair at telomeres, while unphosphorylated NBN promotes microhomology-mediated end-joining (MMEJ) repair. Enhances AKT1 phosphorylation possibly by association with the mTORC2 complex. This is Nibrin (Nbn) from Rattus norvegicus (Rat).